Reading from the N-terminus, the 303-residue chain is MLKSSKHEDSSSKKNQNNKLIFIVRQLFYLIKHFFSKTKTPDNFFGIIKRLKINSQKMSLDEFNILANLLKLEDKIVEDIMVPRSDIIAIKLTTNLEELSESIKIAVPHTRTLIYDGTLDNVVGFIHIKDLFKALATKQNSPLKRLIRKHIIAAPSMKLLDLLAKMRRERTHIAIVVDEYGGTDGLVTIEDLIEEIVGRIDDEHDQQLDSANFKVINNSTIIANARIEVELLEEIIGEKLKNDDDEFDTIGGLVLTRVSSVPAIGTRIDISENIEIEVTDATPRSLKQVKIRLKNGLNSDNLT.

2 CBS domains span residues 81 to 143 (MVPR…NSPL) and 146 to 203 (LIRK…IDDE).

Belongs to the UPF0053 family. Hemolysin C subfamily.

The polypeptide is Hemolysin C (tlyC) (Rickettsia prowazekii (strain Madrid E)).